Reading from the N-terminus, the 543-residue chain is Germacrene A synthase (543 aa).

Residues D296, D300, D439, and E447 each contribute to the Mg(2+) site. A DDXXD motif motif is present at residues 296 to 300 (DDTYD).

It belongs to the terpene synthase family. Tpsa subfamily. It depends on Mg(2+) as a cofactor. Requires Mn(2+) as cofactor. As to expression, barely detectable in leaves.

Its subcellular location is the plastid. The protein resides in the chloroplast. It catalyses the reaction (2E,6E)-farnesyl diphosphate = germacrene A + diphosphate. The catalysed reaction is (2E,6E)-farnesyl diphosphate = (1S,2S,4R)-beta-elemene + diphosphate. It functions in the pathway secondary metabolite biosynthesis; terpenoid biosynthesis. In terms of biological role, sesquiterpene synthase involved in the biosynthesis of volatile compounds widely used in aromatherapy and folk medicine, and present in culinary herbs. Mediates the conversion of (2E,6E)-farnesyl diphosphate (FPP) into germacrene A and beta-elemene. Not able to use (2E)-geranyl diphosphate (GPP) as substrate. This is Germacrene A synthase from Lavandula viridis (Green lavender).